The primary structure comprises 335 residues: RVS161-like protein RVS162 (335 aa).

Positions 17 to 310 constitute a BAR domain; that stretch reads VMLKTGHIEQ…LDAQTRQDYI (294 aa). Residues 30-56 are a coiled coil; that stretch reads KEYEFQEKRYRTMEENSIKLQKNLRLY. The disordered stretch occupies residues 105 to 127; that stretch reads HEEEGEEKEEEENDNTTTTTTTT. A compositionally biased stretch (acidic residues) spans 107–118; sequence EEGEEKEEEEND. The stretch at 222-259 forms a coiled coil; the sequence is TNIIELNHNQYEEKLKIYNQELTEVESKYVEINNQLLI.

The protein localises to the cytoplasm. Its subcellular location is the cytoskeleton. In terms of biological role, component of a cytoskeletal structure that is required for membrane curvature. The chain is RVS161-like protein RVS162 from Candida albicans (strain SC5314 / ATCC MYA-2876) (Yeast).